Consider the following 330-residue polypeptide: Serine/threonine-protein phosphatase PP1-alpha catalytic subunit (330 aa).

The residue at position 2 (serine 2) is an N-acetylserine. Phosphoserine is present on residues serine 2 and serine 22. Positions 64, 66, 92, and 124 each coordinate Mn(2+). Residue histidine 125 is the Proton donor of the active site. Residues histidine 173 and histidine 248 each contribute to the Mn(2+) site. Lysine 305 is modified (N6-acetyllysine). The residue at position 306 (tyrosine 306) is a Phosphotyrosine. The segment at 306–330 (YGQFSGLNPGGRPITPPRNSAKAKK) is disordered. Residue threonine 320 is modified to Phosphothreonine. Serine 325 is subject to Phosphoserine.

The protein belongs to the PPP phosphatase family. PP-1 subfamily. As to quaternary structure, PP1 comprises a catalytic subunit, PPP1CA, PPP1CB or PPP1CC, which is folded into its native form by inhibitor 2 and glycogen synthetase kinase 3, and then complexed to one or several targeting or regulatory subunits. PPP1R12A, PPP1R12B and PPP1R12C mediate binding to myosin. PPP1R3A (in skeletal muscle), PPP1R3B (in liver), PPP1R3C, PPP1R3D and PPP1R3F (in brain) mediate binding to glycogen. Interacts with PPP1R39. Interacts with BTBD10. Interacts with KCTD20. Interacts with PPP1R9A and PPP1R9B. Part of a complex containing PPP1R15B, PP1 and NCK1/2. Interacts with PHACTR4; which acts as an activator of PP1 activity. Interacts with PPP1R15A and PPP1R15B; the interactions mediate binding to EIF2S1. Interacts with PPP1R7. Interacts with YLPM1. Forms a complex with ILF2, ILF3, YLPM1, KHDRBS1, RBMX and NCOA5. Interacts with NOM1 and PPP1R8. Interacts with PPP1R16B. Interacts with RPSA only in the presence of PPP1R16B. Component of the PNUTS-PP1 phosphatase complex, composed of PPP1R10/PNUTS, TOX4, WDR82, and PPP1CA or PPP1CB or PPP1CC. Interacts with PPP1R10/PNUTS and PPP1R8. Interacts with WDR82 in the presence of PPP1R10/PNUTS. Interacts with TRIM28; the interaction dephosphorylates TRIM28 on 'Ser-824' and forms a complex at the p21 promoter site. Interacts with isoform 1 and isoform 4 of NEK2. Interacts with FER; this promotes phosphorylation at Thr-320. Interacts with DAB2; the interaction is mutually exclusive with the AXIN1:PPP1CA interaction. Interacts with FOXP3. Interacts with CENPA. Interacts with ATG16L1. Found in a complex with PPP1CA, PPP1CC, SHC1 and PEAK1. Interacts with tensin TNS1. Interacts with SAXO4, PPP1R21, PPP1R26, PPP1R27, PPP1R35, PPP1R36, PPP1R37, SH3RF2, ELFN1 and ELFN2. Interacts with TPRN; the interaction results in inhibition of PPC1A phosphatase activity. Interacts with SKA1 (via C-terminus); the interaction is direct and required for the recruitment of PP1 to the kinetochore. Interacts with the KNL1 complex subunit KNL1; the interaction is direct and mutually exclusive with KNL1 binding to microtubules. Component of the SHOC2-MRAS-PP1c (SMP) complex consisting of SHOC2, GTP-bound M-Ras/MRAS and the catalytic subunit of protein phosphatase 1 (either PPP1CA, PPP1CB or PPP1CC). SHOC2 and PP1c preferably bind M-Ras/MRAS, but they also bind K-Ras/KRAS, N-Ras/NRAS and H-Ras/HRAS; these interactions are GTP-dependent and both SHOC2 and PP1c are required to form a stable complex. Interacts with SHOC2 in the absence of Ras GTPases. (Microbial infection) Interacts with HHV-1 ICP34.5. In terms of assembly, (Microbial infection) Interacts with Venezuelan equine encephalitis virus (VEEV) capsid protein; this interaction dephosphorylates the capsid protein, which increases its ability to bind to the viral genome. Fe cation is required as a cofactor. It depends on Mn(2+) as a cofactor. Post-translationally, phosphorylated. Dephosphorylated at Thr-320 in the presence of ionizing radiation.

The protein localises to the cytoplasm. It is found in the nucleus. It localises to the nucleoplasm. The protein resides in the nucleolus. It catalyses the reaction O-phospho-L-seryl-[protein] + H2O = L-seryl-[protein] + phosphate. It carries out the reaction O-phospho-L-threonyl-[protein] + H2O = L-threonyl-[protein] + phosphate. Its activity is regulated as follows. The phosphatase activity of the PPP1R15A-PP1 complex toward EIF2S1 is specifically inhibited by Salubrinal, a drug that protects cells from endoplasmic reticulum stress. Functionally, protein phosphatase that associates with over 200 regulatory proteins to form highly specific holoenzymes which dephosphorylate hundreds of biological targets. Protein phosphatase 1 (PP1) is essential for cell division, transcription elongation, and participates in the regulation of glycogen metabolism, muscle contractility and protein synthesis. Involved in regulation of ionic conductances and long-term synaptic plasticity. May play an important role in dephosphorylating substrates such as the postsynaptic density-associated Ca(2+)/calmodulin dependent protein kinase II. Catalytic component of the PNUTS-PP1 protein phosphatase complex, a protein phosphatase 1 (PP1) complex that promotes RNA polymerase II transcription pause-release, allowing transcription elongation: the PNUTS-PP1 complex mediates the release of RNA polymerase II from promoter-proximal region of genes by catalyzing dephosphorylation of proteins involved in transcription, such as AFF4, CDK9, MEPCE, INTS12, NCBP1, POLR2M/GDOWN1 and SUPT6H. The PNUTS-PP1 complex also regulates transcription termination by mediating dephosphorylation of SUPT5H in termination zones downstream of poly(A) sites, thereby promoting deceleration of RNA polymerase II transcription. PNUTS-PP1 complex is also involved in the response to replication stress by mediating dephosphorylation of POLR2A at 'Ser-5' of the CTD, promoting RNA polymerase II degradation. PNUTS-PP1 also plays a role in the control of chromatin structure and cell cycle progression during the transition from mitosis into interphase. Regulates NEK2 function in terms of kinase activity and centrosome number and splitting, both in the presence and absence of radiation-induced DNA damage. Regulator of neural tube and optic fissure closure, and enteric neural crest cell (ENCCs) migration during development. In balance with CSNK1D and CSNK1E, determines the circadian period length, through the regulation of the speed and rhythmicity of PER1 and PER2 phosphorylation. May dephosphorylate CSNK1D and CSNK1E. Dephosphorylates the 'Ser-418' residue of FOXP3 in regulatory T-cells (Treg) from patients with rheumatoid arthritis, thereby inactivating FOXP3 and rendering Treg cells functionally defective. Dephosphorylates CENPA. Dephosphorylates the 'Ser-139' residue of ATG16L1 causing dissociation of ATG12-ATG5-ATG16L1 complex, thereby inhibiting autophagy. Together with PPP1CC (PP1-gamma subunit), dephosphorylates IFIH1/MDA5 and RIG-I leading to their activation and a functional innate immune response. Core component of the SHOC2-MRAS-PP1c (SMP) holophosphatase complex that regulates the MAPK pathway activation. The SMP complex specifically dephosphorylates the inhibitory phosphorylation at 'Ser-259' of RAF1 kinase, 'Ser-365' of BRAF kinase and 'Ser-214' of ARAF kinase, stimulating their kinase activities. The SMP complex enhances the dephosphorylation activity and substrate specificity of PP1c. In terms of biological role, (Microbial infection) Necessary for alphaviruses replication. This chain is Serine/threonine-protein phosphatase PP1-alpha catalytic subunit (PPP1CA), found in Homo sapiens (Human).